The primary structure comprises 264 residues: 3-methyl-2-oxobutanoate hydroxymethyltransferase (264 aa).

The Mg(2+) site is built by aspartate 45 and aspartate 84. 3-methyl-2-oxobutanoate-binding positions include 45-46 (DS), aspartate 84, and lysine 113. Glutamate 115 lines the Mg(2+) pocket. The active-site Proton acceptor is the glutamate 182.

This sequence belongs to the PanB family. In terms of assembly, homodecamer; pentamer of dimers. The cofactor is Mg(2+).

It is found in the cytoplasm. The catalysed reaction is 3-methyl-2-oxobutanoate + (6R)-5,10-methylene-5,6,7,8-tetrahydrofolate + H2O = 2-dehydropantoate + (6S)-5,6,7,8-tetrahydrofolate. It participates in cofactor biosynthesis; (R)-pantothenate biosynthesis; (R)-pantoate from 3-methyl-2-oxobutanoate: step 1/2. Its function is as follows. Catalyzes the reversible reaction in which hydroxymethyl group from 5,10-methylenetetrahydrofolate is transferred onto alpha-ketoisovalerate to form ketopantoate. This is 3-methyl-2-oxobutanoate hydroxymethyltransferase from Nitrosococcus oceani (strain ATCC 19707 / BCRC 17464 / JCM 30415 / NCIMB 11848 / C-107).